We begin with the raw amino-acid sequence, 311 residues long: Formimidoylglutamase (311 aa).

Mn(2+)-binding residues include histidine 130, aspartate 155, histidine 157, aspartate 159, cysteine 242, and aspartate 244.

The protein belongs to the arginase family. Mn(2+) serves as cofactor.

The enzyme catalyses N-formimidoyl-L-glutamate + H2O = formamide + L-glutamate. It participates in amino-acid degradation; L-histidine degradation into L-glutamate; L-glutamate from N-formimidoyl-L-glutamate (hydrolase route): step 1/1. Catalyzes the conversion of N-formimidoyl-L-glutamate to L-glutamate and formamide. The polypeptide is Formimidoylglutamase (Staphylococcus aureus (strain bovine RF122 / ET3-1)).